The following is a 396-amino-acid chain: Gap junction gamma-1 protein (396 aa).

Topologically, residues 1–22 (MSWSFLTRLLEEIHNHSTFVGK) are cytoplasmic. A helical transmembrane segment spans residues 23–45 (IWLTVLIVFRIVLTAVGGESIYY). Residues 46–75 (DEQSKFVCNTEQPGCENVCYDAFAPLSHVR) are Extracellular-facing. A helical transmembrane segment spans residues 76–95 (FWVFQIILVATPSVMYLGYA). Over 96 to 175 (IHKIAKMEHG…RRIREDGLMK (80 aa)) the chain is Cytoplasmic. A disordered region spans residues 145-165 (ELESEKENKEQNQSKPKHDGR). Positions 147–156 (ESEKENKEQN) are enriched in basic and acidic residues. Residues 176-198 (IYVLQLLARTMFEVGFLIGQYFL) traverse the membrane as a helical segment. Topologically, residues 199-228 (YGFQVHPFYVCSRVPCPHKIDCFISRPTEK) are extracellular. The chain crosses the membrane as a helical span at residues 229–248 (TIFLLIMYGVTGLCLLLNIW). The Cytoplasmic portion of the chain corresponds to 249–396 (EMLHLGFGTI…SGDGKTSVWI (148 aa)). Residues 357–396 (NHQNNPHGPREKKAKVGSKAGSNKSSASSKSGDGKTSVWI) are disordered. Low complexity predominate over residues 373–396 (GSKAGSNKSSASSKSGDGKTSVWI).

This sequence belongs to the connexin family. Gamma-type subfamily. A connexon is composed of a hexamer of connexins. Interacts with CNST.

Its subcellular location is the cell membrane. It localises to the cell junction. The protein resides in the gap junction. Its function is as follows. One gap junction consists of a cluster of closely packed pairs of transmembrane channels, the connexons, through which materials of low MW diffuse from one cell to a neighboring cell. The sequence is that of Gap junction gamma-1 protein (GJC1) from Sus scrofa (Pig).